The primary structure comprises 102 residues: Carboxysome shell protein CcmK2 (102 aa).

The BMC domain occupies 4–90 (AVGMIETLGF…PHENLEYVLP (87 aa)).

The protein belongs to the bacterial microcompartments protein family. CcmK subfamily. Homohexamer. Interacts with CcmO in the carboxysome. Interacts with CcmN.

The protein localises to the carboxysome. Its function is as follows. One of the shell proteins of the carboxysome, a polyhedral inclusion where RuBisCO (ribulose bisphosphate carboxylase, rbcL-rbcS) is sequestered. Assembles into hexamers which make sheets that form the facets of the polyhedral carboxysome. The hexamer central pore probably regulates metabolite flux. The major shell protein of the carboxysome, a polyhedral inclusion where RuBisCO (ribulose bisphosphate carboxylase, rbcL-rbcS) is sequestered. Hexamers make sheets that form the facets of the polyhedral carboxysome. The shell is 4.5 nm thick, as observed for CcmK hexamers. Required for recruitment of CcmO to the pre-carboxysome. In PCC 7942 there are several CcmK paralogs with presumably functional differences; replacing the central pore residues (34-37) with those of either CcmK4 from this organism (Tyr-Met-Arg-Ala) or from an alpha-type carboxysome forming cyanobacterium (CsoS1 of P.marinus strain MIT 9313, Arg-Glu-Phe-Val) allows the bacterium to make carboxysomes, but the expression level is too low to know if the carboxysome is functional for CO(2) fixation. In terms of biological role, beta-carboxysome assembly initiates when soluble RuBisCO is condensed into a liquid matrix in a pre-carboxysome by the RbcS-like domains of probably both CcmM58 and CcmM35. CcmN interacts with the N-terminus of CcmM58, and then recruits the CcmK2 major shell protein via CcmN's encapsulation peptide. Shell formation requires CcmK proteins and CcmO. CcmL caps the otherwise elongated carboxysome. Once fully encapsulated carboxysomes are formed, they migrate within the cell probably via interactions with the cytoskeleton. The sequence is that of Carboxysome shell protein CcmK2 from Synechococcus elongatus (strain ATCC 33912 / PCC 7942 / FACHB-805) (Anacystis nidulans R2).